A 460-amino-acid polypeptide reads, in one-letter code: MDGALFLLRGRTEAILTMKIHITSLGCAKNRVDTEVMMGLLREAGYELTQREEDAHVLLVNTCGFILPAKEESIQTILELARYKETGRCRALLVAGCLPQGYAGELAAELPEVDAFFGPGDVPRVTSIVAEVLRGKRSLEVGKPDFLYDHTMPRVLSTPFHYAYVKIADGCDNRCGYCAIPNLRGRFRSRSEESIVEETRSLVDRGIQEALLIAQDTTCYGVDRYGEFRLAQLIGKLASIDGLRWIRLMYCYPSHFTPELIEAMAAEPKVCRYVDLPLQHADDELLRSMNRHAGVDEIRRLIRTLRERLPGLAIRTSFIVGLPGETEEKFQRLLDFLAEMRFDRVGIFTYSREENTPAGKLADQVPEEVKEERYHRAMVLQQEISLSIQQEWIGKTLEVLVEEEVAPGLYRGRSEREAPEVDGHIEFKGRHRMIGEWANVRITAASHYDLMGEAIDEPGE.

In terms of domain architecture, MTTase N-terminal spans 18-134 (MKIHITSLGC…VTSIVAEVLR (117 aa)). Positions 27, 63, 97, 171, 175, and 178 each coordinate [4Fe-4S] cluster. A Radical SAM core domain is found at 157 to 387 (STPFHYAYVK…MVLQQEISLS (231 aa)). Positions 390–456 (QEWIGKTLEV…HYDLMGEAID (67 aa)) constitute a TRAM domain.

The protein belongs to the methylthiotransferase family. RimO subfamily. Requires [4Fe-4S] cluster as cofactor.

The protein resides in the cytoplasm. It carries out the reaction L-aspartate(89)-[ribosomal protein uS12]-hydrogen + (sulfur carrier)-SH + AH2 + 2 S-adenosyl-L-methionine = 3-methylsulfanyl-L-aspartate(89)-[ribosomal protein uS12]-hydrogen + (sulfur carrier)-H + 5'-deoxyadenosine + L-methionine + A + S-adenosyl-L-homocysteine + 2 H(+). Functionally, catalyzes the methylthiolation of an aspartic acid residue of ribosomal protein uS12. The protein is Ribosomal protein uS12 methylthiotransferase RimO of Heliobacterium modesticaldum (strain ATCC 51547 / Ice1).